The sequence spans 279 residues: Large ribosomal subunit protein uL2 (279 aa).

A disordered region spans residues 223–279 (VVMNPVDHPHGGGEGRTSGGRHPVSPWGQPTKGYKTRRSARPSDKFIVQKRKRNRNR). A compositionally biased stretch (basic residues) spans 270–279 (VQKRKRNRNR).

Belongs to the universal ribosomal protein uL2 family. Part of the 50S ribosomal subunit. Forms a bridge to the 30S subunit in the 70S ribosome.

Its function is as follows. One of the primary rRNA binding proteins. Required for association of the 30S and 50S subunits to form the 70S ribosome, for tRNA binding and peptide bond formation. It has been suggested to have peptidyltransferase activity; this is somewhat controversial. Makes several contacts with the 16S rRNA in the 70S ribosome. This is Large ribosomal subunit protein uL2 from Leptospira borgpetersenii serovar Hardjo-bovis (strain JB197).